The following is a 144-amino-acid chain: Large ribosomal subunit protein uL16 (144 aa).

It belongs to the universal ribosomal protein uL16 family. In terms of assembly, part of the 50S ribosomal subunit.

Binds 23S rRNA and is also seen to make contacts with the A and possibly P site tRNAs. This is Large ribosomal subunit protein uL16 from Lacticaseibacillus paracasei (strain ATCC 334 / BCRC 17002 / CCUG 31169 / CIP 107868 / KCTC 3260 / NRRL B-441) (Lactobacillus paracasei).